A 149-amino-acid chain; its full sequence is MKIIFTEDVRGKGRRGEIKELPDGYANFLIKQNKAKQANAQAMSQLKGQKRAEARKEAEELEEAKKFKELLESGERVVEMKAKAGTDGRLFGSITSKQISQELEKQYGMKIDKRKMELREPIRTMGYVNVPVKLHNEVTAKIRVHISEK.

It belongs to the bacterial ribosomal protein bL9 family.

Functionally, binds to the 23S rRNA. In Ligilactobacillus salivarius (strain UCC118) (Lactobacillus salivarius), this protein is Large ribosomal subunit protein bL9.